The sequence spans 246 residues: Transcription factor MYB113 (246 aa).

HTH myb-type domains are found at residues 5–61 (PKGL…KPSI) and 62–112 (KRGK…SKKH). DNA-binding regions (H-T-H motif) lie at residues 33 to 57 (WHRV…LNYL) and 85 to 108 (WSLI…NTHL).

In terms of assembly, interacts with BHLH002/EGL3/MYC146, BHLH012/MYC1 and BHLH042/TT8.

It is found in the nucleus. Transcription activator, when associated with BHLH002/EGL3/MYC146, BHLH012/MYC1, or BHLH042/TT8. The protein is Transcription factor MYB113 (MYB113) of Arabidopsis thaliana (Mouse-ear cress).